Consider the following 166-residue polypeptide: NAD(P)H-quinone oxidoreductase subunit I, chloroplastic (166 aa).

2 4Fe-4S ferredoxin-type domains span residues 55–84 and 95–124; these read GRIH…VDWK and LNYS…MTEE. Cysteine 64, cysteine 67, cysteine 70, cysteine 74, cysteine 104, cysteine 107, cysteine 110, and cysteine 114 together coordinate [4Fe-4S] cluster.

It belongs to the complex I 23 kDa subunit family. NDH is composed of at least 16 different subunits, 5 of which are encoded in the nucleus. Requires [4Fe-4S] cluster as cofactor.

It localises to the plastid. It is found in the chloroplast thylakoid membrane. It catalyses the reaction a plastoquinone + NADH + (n+1) H(+)(in) = a plastoquinol + NAD(+) + n H(+)(out). The catalysed reaction is a plastoquinone + NADPH + (n+1) H(+)(in) = a plastoquinol + NADP(+) + n H(+)(out). In terms of biological role, NDH shuttles electrons from NAD(P)H:plastoquinone, via FMN and iron-sulfur (Fe-S) centers, to quinones in the photosynthetic chain and possibly in a chloroplast respiratory chain. The immediate electron acceptor for the enzyme in this species is believed to be plastoquinone. Couples the redox reaction to proton translocation, and thus conserves the redox energy in a proton gradient. In Hofmeisteria fasciculata (Helogyne fasciculata), this protein is NAD(P)H-quinone oxidoreductase subunit I, chloroplastic.